The following is a 318-amino-acid chain: Mitochondrial coenzyme A transporter SLC25A42 (318 aa).

Solcar repeat units lie at residues 31–117 (RQVL…YKRI), 129–214 (LPPW…LKSL), and 224–312 (PYPF…MQIL). 6 helical membrane passes run 33-53 (VLSS…AVAP), 89-109 (LWRG…IQFS), 135-155 (LLAG…LDLV), 186-206 (LYFG…LSFF), 230-250 (MVFG…LDVV), and 293-313 (LKGP…QILL).

This sequence belongs to the mitochondrial carrier (TC 2.A.29) family.

Its subcellular location is the mitochondrion inner membrane. It carries out the reaction ADP(out) + CoA(in) = ADP(in) + CoA(out). The catalysed reaction is 3'-dephospho-CoA(in) + ADP(out) = 3'-dephospho-CoA(out) + ADP(in). It catalyses the reaction adenosine 3',5'-bisphosphate(in) + ADP(out) = adenosine 3',5'-bisphosphate(out) + ADP(in). The enzyme catalyses AMP(in) + ADP(out) = AMP(out) + ADP(in). It carries out the reaction dADP(in) + ADP(out) = dADP(out) + ADP(in). The catalysed reaction is ADP(in) + ATP(out) = ADP(out) + ATP(in). In terms of biological role, mitochondrial carrier mediating the transport of coenzyme A (CoA) in mitochondria in exchange for intramitochondrial (deoxy)adenine nucleotides and adenosine 3',5'-diphosphate. The chain is Mitochondrial coenzyme A transporter SLC25A42 (Slc25a42) from Mus musculus (Mouse).